The following is a 293-amino-acid chain: MSEPKNKRQKREDYRAALRANGVTELPRKKFYRQRAHANPFSDHSLIYPPTPEQMDWASLYPHYAVEEPIEQKTETTESEESTGQELSAPAIRKLTKQVEVADIGCGFGGLLIALAPVLPETLVLGLEIRVSVTQFVEDRIKALRVQNEEQKLYRNIAVLRANTMKFMPNFFNKGQLNKIFICFPDPHFKARKHKQRIVSTTLNSEYAYVLRPGGIVYTITDVPDLHEWMVGHFNAHPAFERVSVEEQEADPLVEIMRNETEEGKKVTRHNGQKHVALFRRLEDPQWPEDVSA.

Residues glycine 105, 128-129 (EI), 163-164 (NT), and cysteine 183 contribute to the S-adenosyl-L-methionine site. Residue aspartate 186 is part of the active site. Position 261–263 (261–263 (TEE)) interacts with S-adenosyl-L-methionine.

The protein belongs to the class I-like SAM-binding methyltransferase superfamily. TrmB family. As to quaternary structure, forms a complex with trm82.

The protein localises to the nucleus. The catalysed reaction is guanosine(46) in tRNA + S-adenosyl-L-methionine = N(7)-methylguanosine(46) in tRNA + S-adenosyl-L-homocysteine. Its pathway is tRNA modification; N(7)-methylguanine-tRNA biosynthesis. Catalyzes the formation of N(7)-methylguanine at position 46 (m7G46) in tRNA. The protein is tRNA (guanine-N(7)-)-methyltransferase (trm8) of Neurospora crassa (strain ATCC 24698 / 74-OR23-1A / CBS 708.71 / DSM 1257 / FGSC 987).